A 456-amino-acid chain; its full sequence is FAD-dependent monooxygenase sor5 (456 aa).

A helical transmembrane segment spans residues Pro18–Leu38. An N-linked (GlcNAc...) asparagine glycan is attached at Asn43. The FAD site is built by Glu48 and Arg119. Arg200 is a catalytic residue. The FAD site is built by Asp331 and Ala344.

Belongs to the paxM FAD-dependent monooxygenase family. FAD is required as a cofactor.

It is found in the membrane. It functions in the pathway secondary metabolite biosynthesis. In terms of biological role, FAD-dependent monooxygenase; part of the SOR gene cluster that mediates the biosynthesis of sorbicillinoids, a diverse group of yellow secondary metabolites that restrict growth of competing pathogenic fungi but not of bacteria. Sorbicillinoids biosynthesis requires the action of two PKSs. The SOR cluster is required for the production of trichodimerol and dihydrotrichotetronin, with sor2 being sufficient for production of trichodimerol, but not dihydrotrichotetronin in the light. Sor1 iteratively combines three acetyl units and the growing chain is modified by the ketoacyl reductase subunit, and optional by the enoyl reductase subunit in the second cycle. The polyketide is then handed over to the PKS sor2, which adds three more acetyl units, and two methyl groups. Sor2 releases an aldehyde, which undergoes spontaneous cyclization resulting in the formation of sorbicillin or 2',3'-dihydrosorbicillin. The monooxygenase sor5 oxidizes sorbicillin and 2',3'-dihydrosorbicillin to 2',3'-dihydrosorbicillinol and sorbicillinol, respectively. The oxidoreductase sor8 further converts sorbicillinol into oxosorbicillinol. Sorbicillinol is the building block for the other sorbicillinoids such as disorbicillinol, bisvertinolon, dihydrobisvertinolone, and dihydrotrichotetronine. The protein is FAD-dependent monooxygenase sor5 of Hypocrea jecorina (strain QM6a) (Trichoderma reesei).